We begin with the raw amino-acid sequence, 151 residues long: 3-dehydroquinate dehydratase (151 aa).

The active-site Proton acceptor is Y24. The substrate site is built by N76, H82, and D89. H102 functions as the Proton donor in the catalytic mechanism. Substrate-binding positions include 103–104 (VS) and R113.

This sequence belongs to the type-II 3-dehydroquinase family. As to quaternary structure, homododecamer.

The enzyme catalyses 3-dehydroquinate = 3-dehydroshikimate + H2O. The protein operates within metabolic intermediate biosynthesis; chorismate biosynthesis; chorismate from D-erythrose 4-phosphate and phosphoenolpyruvate: step 3/7. Functionally, catalyzes a trans-dehydration via an enolate intermediate. The chain is 3-dehydroquinate dehydratase from Rhodopseudomonas palustris (strain TIE-1).